Consider the following 670-residue polypeptide: Lebercilin-like protein (670 aa).

The interval Arg24 to Ala44 is disordered. Coiled-coil stretches lie at residues Leu148–Glu259 and Ala305–Ile336. The tract at residues Tyr351–Ser402 is disordered. Residues Pro368 to Ser380 show a composition bias toward polar residues. A coiled-coil region spans residues Glu420–Val440. 3 disordered regions span residues Arg495–Gln520, Leu533–Lys594, and Gly606–Asp647. Residues Ala546 to His558 show a composition bias toward polar residues. Basic and acidic residues-rich tracts occupy residues Ser560 to Ser572, Lys585 to Lys594, and Gly621 to His632. A compositionally biased stretch (polar residues) spans Ser637–Asp647.

This sequence belongs to the LCA5 family.

This Papio anubis (Olive baboon) protein is Lebercilin-like protein.